The chain runs to 139 residues: D-ribose pyranase (139 aa).

H20 serves as the catalytic Proton donor. Substrate-binding positions include D28, H106, and 128–130 (YAN).

Belongs to the RbsD / FucU family. RbsD subfamily. Homodecamer.

Its subcellular location is the cytoplasm. The catalysed reaction is beta-D-ribopyranose = beta-D-ribofuranose. Its pathway is carbohydrate metabolism; D-ribose degradation; D-ribose 5-phosphate from beta-D-ribopyranose: step 1/2. In terms of biological role, catalyzes the interconversion of beta-pyran and beta-furan forms of D-ribose. The polypeptide is D-ribose pyranase (Shewanella pealeana (strain ATCC 700345 / ANG-SQ1)).